The sequence spans 481 residues: Glucan endo-1,3-beta-glucosidase 8 (481 aa).

A signal peptide spans 1–33; that stretch reads MSNLLALVVGFVIVIGHLGILVNGLGVNWGTMA. Residues Asn-99 and Asn-110 are each glycosylated (N-linked (GlcNAc...) asparagine). The active-site Proton donor is Glu-119. Residues Asn-126 and Asn-131 are each glycosylated (N-linked (GlcNAc...) asparagine). The active-site Nucleophile is Glu-265. Residues Cys-367 and Cys-428 are joined by a disulfide bond. Asn-409 and Asn-440 each carry an N-linked (GlcNAc...) asparagine glycan. Ser-455 carries GPI-anchor amidated serine lipidation. Positions 456 to 481 are cleaved as a propeptide — removed in mature form; that stretch reads SASSFSCSSYSLVVLIVWFLLSGMMF.

The protein belongs to the glycosyl hydrolase 17 family. In terms of processing, contains two additional disulfide bonds.

It localises to the secreted. The protein localises to the cell wall. The protein resides in the cell membrane. The enzyme catalyses Hydrolysis of (1-&gt;3)-beta-D-glucosidic linkages in (1-&gt;3)-beta-D-glucans.. This Arabidopsis thaliana (Mouse-ear cress) protein is Glucan endo-1,3-beta-glucosidase 8.